The primary structure comprises 1357 residues: DNA-directed RNA polymerase subunit beta (1357 aa).

The protein belongs to the RNA polymerase beta chain family. The RNAP catalytic core consists of 2 alpha, 1 beta, 1 beta' and 1 omega subunit. When a sigma factor is associated with the core the holoenzyme is formed, which can initiate transcription.

The enzyme catalyses RNA(n) + a ribonucleoside 5'-triphosphate = RNA(n+1) + diphosphate. In terms of biological role, DNA-dependent RNA polymerase catalyzes the transcription of DNA into RNA using the four ribonucleoside triphosphates as substrates. This is DNA-directed RNA polymerase subunit beta from Pseudomonas paraeruginosa (strain DSM 24068 / PA7) (Pseudomonas aeruginosa (strain PA7)).